The sequence spans 453 residues: Serine incorporator 1 (453 aa).

A lipid anchor (N-myristoyl glycine) is attached at glycine 2. The Cytoplasmic portion of the chain corresponds to 2–39 (GSVLGLCSMASWIPCLCGSAPCLLCRCCPSGNNSTVTR). The helical transmembrane segment at 40-60 (LIYALFLLVGVCVACVMLIPG) threads the bilayer. Residues 61-88 (MEEQLNKIPGFCENEKGVVPCNILVGYK) lie on the Lumenal side of the membrane. The chain crosses the membrane as a helical span at residues 89 to 109 (AVYRLCFGLAMFYLLLSLLMI). Residues 110-123 (KVKSSSDPRAAVHN) are Cytoplasmic-facing. Residues 124-144 (GFWFFKFAAAIAIIIGAFFIP) form a helical membrane-spanning segment. At 145–151 (EGTFTTV) the chain is on the lumenal side. Residues 152-172 (WFYVGMAGAFCFILIQLVLLI) traverse the membrane as a helical segment. At 173-197 (DFAHSWNESWVEKMEEGNSRCWYAA) the chain is on the cytoplasmic side. Residues 198–218 (LLSATALNYLLSLVAIVLFFV) traverse the membrane as a helical segment. Residues 219 to 231 (YYTHPASCSENKA) lie on the Lumenal side of the membrane. The chain crosses the membrane as a helical span at residues 232-252 (FISVNMLLCIGASVMSILPKI). Topologically, residues 253–259 (QESQPRS) are cytoplasmic. Residues 260 to 280 (GLLQSSVITVYTMYLTWSAMT) form a helical membrane-spanning segment. Topologically, residues 281-309 (NEPETNCNPSLLSIIGYNTTSTVPKEGQS) are lumenal. The helical transmembrane segment at 310-330 (VQWWHAQGIIGLILFLLCVFY) threads the bilayer. Topologically, residues 331–387 (SSIRTSNNSQVNKLTLTSDESTLIEDGGARSDGSLEDGDDVHRAVDNERDGVTYSYS) are cytoplasmic. Position 351 is a phosphoserine (serine 351). At threonine 352 the chain carries Phosphothreonine. Phosphoserine is present on residues serine 361 and serine 364. A helical membrane pass occupies residues 388 to 408 (FFHFMLFLASLYIMMTLTNWY). The Lumenal segment spans residues 409–426 (RYEPSREMKSQWTAVWVK). Residues 427-447 (ISSSWIGIVLYVWTLVAPLVL) form a helical membrane-spanning segment. Over 448-453 (TNRDFD) the chain is Cytoplasmic.

This sequence belongs to the TDE1 family. Interacts with SPTLC1.

It is found in the endoplasmic reticulum membrane. In terms of biological role, enhances the incorporation of serine into phosphatidylserine and sphingolipids. This chain is Serine incorporator 1 (SERINC1), found in Pongo abelii (Sumatran orangutan).